Consider the following 962-residue polypeptide: Synphilin-1 (962 aa).

3 disordered regions span residues 80-99, 104-137, and 222-249; these read SPLK…DQKN, YQKG…EPSQ, and TALR…PAYE. ANK repeat units lie at residues 348-379, 383-412, 418-447, and 455-484; these read NGNN…CLNE, EQLT…AIAE, DFPS…EQGI, and EGNS…NVTM. Positions 522 to 548 form a coiled coil; that stretch reads VKLTKQLKEQTVERVTLQSQLQQLLEA. The segment at 548–590 is disordered; the sequence is AQKSEGKSLPSSPSSPSSPASTKSQWKALDTDEESTGKSKVGA. The segment covering 554-571 has biased composition (low complexity); that stretch reads KSLPSSPSSPSSPASTKS. The ANK 5 repeat unit spans residues 602–631; that stretch reads VSSRARTKGKDEDSDKILRQLLGKEISENV. The span at 667–684 shows a compositional bias: low complexity; the sequence is RQLMQRSLSESDTDSNNS. The segment at 667-852 is disordered; that stretch reads RQLMQRSLSE…QRTSESGEQM (186 aa). Positions 685 to 699 are enriched in basic and acidic residues; the sequence is EDPKNTPVKRADRPR. The stretch at 698–728 is one ANK 6 repeat; that stretch reads PRPQPIVESVENVDSAESLHLMIKKHSLASG. The span at 772 to 790 shows a compositional bias: polar residues; that stretch reads PSTEATQSSPDSTAAQKVA. Positions 831–840 are enriched in basic and acidic residues; that stretch reads NGEKDKDKGR.

As to quaternary structure, associates with SNCA, RNF19A and PRKN. Post-translationally, ubiquitinated; mediated by SIAH1 or RNF19A and leading to its subsequent proteasomal degradation.

In Mus musculus (Mouse), this protein is Synphilin-1 (Sncaip).